Reading from the N-terminus, the 156-residue chain is Small ribosomal subunit protein uS7 (156 aa).

The protein belongs to the universal ribosomal protein uS7 family. In terms of assembly, part of the 30S ribosomal subunit. Contacts proteins S9 and S11.

In terms of biological role, one of the primary rRNA binding proteins, it binds directly to 16S rRNA where it nucleates assembly of the head domain of the 30S subunit. Is located at the subunit interface close to the decoding center, probably blocks exit of the E-site tRNA. This is Small ribosomal subunit protein uS7 from Wigglesworthia glossinidia brevipalpis.